Reading from the N-terminus, the 284-residue chain is Tropomyosin beta chain (284 aa).

M1 carries the post-translational modification N-acetylmethionine. A disordered region spans residues 1 to 65; the sequence is MDAIKKKMQM…EVEKYSESVK (65 aa). A coiled-coil region spans residues 1-284; it reads MDAIKKKMQM…DNALNDITSL (284 aa). Basic and acidic residues-rich tracts occupy residues 12-40 and 51-65; these read KLDK…KQLE and KGTE…ESVK. T53 carries the post-translational modification Phosphothreonine. Phosphoserine; by PIK3CG is present on S61. Phosphothreonine is present on T79. Residue S87 is modified to Phosphoserine. T108 carries the phosphothreonine modification. Residues 117 to 136 are disordered; that stretch reads EKAADESERGMKVIENRAMK. A phosphoserine mark is found at S158, S206, and S215. T252 is subject to Phosphothreonine. Y261 carries the post-translational modification Phosphotyrosine. Residue S271 is modified to Phosphoserine. T282 is modified (phosphothreonine). S283 is modified (phosphoserine).

Belongs to the tropomyosin family. As to quaternary structure, homodimer. Heterodimer of an alpha (TPM1, TPM3 or TPM4) and a beta (TPM2) chain. In terms of processing, phosphorylated on Ser-61 by PIK3CG. Phosphorylation on Ser-61 is required for ADRB2 internalization. Present in primary breast cancer tissue, absent from normal breast tissue.

Its subcellular location is the cytoplasm. The protein resides in the cytoskeleton. Functionally, binds to actin filaments in muscle and non-muscle cells. Plays a central role, in association with the troponin complex, in the calcium dependent regulation of vertebrate striated muscle contraction. Smooth muscle contraction is regulated by interaction with caldesmon. In non-muscle cells is implicated in stabilizing cytoskeleton actin filaments. The non-muscle isoform may have a role in agonist-mediated receptor internalization. In Homo sapiens (Human), this protein is Tropomyosin beta chain (TPM2).